The primary structure comprises 330 residues: G-protein coupled bile acid receptor 1 (330 aa).

Residues 1-19 lie on the Extracellular side of the membrane; it reads MTPNSTGEVPSPIPKGALG. An N-linked (GlcNAc...) asparagine glycan is attached at asparagine 4. A helical transmembrane segment spans residues 20–40; sequence LSLALASLIITANLLLALGIA. Residues 41–50 are Cytoplasmic-facing; the sequence is WDRRLRSPPA. The helical transmembrane segment at 51-71 threads the bilayer; that stretch reads GCFFLSLLLAGLLTGLALPTL. At 72 to 85 the chain is on the extracellular side; the sequence is PGLWNQSRRGYWSC. A glycan (N-linked (GlcNAc...) asparagine) is linked at asparagine 76. Cysteine 85 and cysteine 155 are disulfide-bonded. A helical transmembrane segment spans residues 86 to 106; that stretch reads LLVYLAPNFSFLSLLANLLLV. Residues 107–125 are Cytoplasmic-facing; sequence HGERYMAVLRPLQPPGSIR. Residues 126-146 traverse the membrane as a helical segment; sequence LALLLTWAGPLLFASLPALGW. Topologically, residues 147-165 are extracellular; the sequence is NHWTPGANCSSQAIFPAPY. Residues 166-186 traverse the membrane as a helical segment; sequence LYLEVYGLLLPAVGAAAFLSV. Residues 187–228 are Cytoplasmic-facing; sequence RVLATAHRQLQDICRLERAVCRDEPSALARALTWRQARAQAG. The chain crosses the membrane as a helical span at residues 229-249; the sequence is AMLLFGLCWGPYVATLLLSVL. Residues 250–261 are Extracellular-facing; that stretch reads AYEQRPPLGPGT. The helical transmembrane segment at 262–282 threads the bilayer; that stretch reads LLSLLSLGSASAAAVPVAMGL. Over 283 to 330 the chain is Cytoplasmic; sequence GDQRYTAPWRAAAQRCLQGLWGRASRDSPGPSIAYHPSSQSSVDLDLN. The segment at 309 to 330 is disordered; sequence DSPGPSIAYHPSSQSSVDLDLN. Residues 319–330 show a composition bias toward polar residues; it reads PSSQSSVDLDLN.

This sequence belongs to the G-protein coupled receptor 1 family. In terms of tissue distribution, ubiquitously expressed. Expressed at higher level in spleen and placenta. Expressed at lower level in other tissues. In digestive tissues, it is expressed in stomach, duodenum, ileocecum, ileum, jejunum, ascending colon, transverse colon, descending colon, cecum and liver, but not in esophagus and rectum.

Its subcellular location is the cell membrane. In terms of biological role, receptor for bile acid. Bile acid-binding induces its internalization, activation of extracellular signal-regulated kinase and intracellular cAMP production. May be involved in the suppression of macrophage functions by bile acids. The sequence is that of G-protein coupled bile acid receptor 1 (GPBAR1) from Homo sapiens (Human).